Consider the following 291-residue polypeptide: Bifunctional protein FolD (291 aa).

NADP(+) is bound by residues 171–173 and isoleucine 239; that span reads GVS.

It belongs to the tetrahydrofolate dehydrogenase/cyclohydrolase family. In terms of assembly, homodimer.

It carries out the reaction (6R)-5,10-methylene-5,6,7,8-tetrahydrofolate + NADP(+) = (6R)-5,10-methenyltetrahydrofolate + NADPH. The enzyme catalyses (6R)-5,10-methenyltetrahydrofolate + H2O = (6R)-10-formyltetrahydrofolate + H(+). It participates in one-carbon metabolism; tetrahydrofolate interconversion. In terms of biological role, catalyzes the oxidation of 5,10-methylenetetrahydrofolate to 5,10-methenyltetrahydrofolate and then the hydrolysis of 5,10-methenyltetrahydrofolate to 10-formyltetrahydrofolate. This is Bifunctional protein FolD from Xylella fastidiosa (strain Temecula1 / ATCC 700964).